The sequence spans 61 residues: Small ribosomal subunit protein uS14 (61 aa).

The Zn(2+) site is built by Cys24, Cys27, Cys40, and Cys43.

This sequence belongs to the universal ribosomal protein uS14 family. Zinc-binding uS14 subfamily. Part of the 30S ribosomal subunit. Contacts proteins S3 and S10. Zn(2+) is required as a cofactor.

Functionally, binds 16S rRNA, required for the assembly of 30S particles and may also be responsible for determining the conformation of the 16S rRNA at the A site. This chain is Small ribosomal subunit protein uS14, found in Ureaplasma parvum serovar 3 (strain ATCC 27815 / 27 / NCTC 11736).